The following is a 310-amino-acid chain: N-acetyl-gamma-glutamyl-phosphate reductase (310 aa).

C117 is a catalytic residue.

This sequence belongs to the NAGSA dehydrogenase family. Type 2 subfamily.

The protein resides in the cytoplasm. It carries out the reaction N-acetyl-L-glutamate 5-semialdehyde + phosphate + NADP(+) = N-acetyl-L-glutamyl 5-phosphate + NADPH + H(+). It participates in amino-acid biosynthesis; L-arginine biosynthesis; N(2)-acetyl-L-ornithine from L-glutamate: step 3/4. Catalyzes the NADPH-dependent reduction of N-acetyl-5-glutamyl phosphate to yield N-acetyl-L-glutamate 5-semialdehyde. This chain is N-acetyl-gamma-glutamyl-phosphate reductase, found in Brucella suis (strain ATCC 23445 / NCTC 10510).